Consider the following 299-residue polypeptide: Acetylglutamate kinase (299 aa).

Substrate is bound by residues 72 to 73 (GG), Arg-94, and Asn-196.

Belongs to the acetylglutamate kinase family. ArgB subfamily.

Its subcellular location is the cytoplasm. It catalyses the reaction N-acetyl-L-glutamate + ATP = N-acetyl-L-glutamyl 5-phosphate + ADP. It functions in the pathway amino-acid biosynthesis; L-arginine biosynthesis; N(2)-acetyl-L-ornithine from L-glutamate: step 2/4. Catalyzes the ATP-dependent phosphorylation of N-acetyl-L-glutamate. The protein is Acetylglutamate kinase of Burkholderia mallei (strain NCTC 10247).